A 414-amino-acid chain; its full sequence is NAD-specific glutamate dehydrogenase (414 aa).

2 residues coordinate substrate: lysine 70 and lysine 94. Catalysis depends on lysine 106, which acts as the Proton donor. The NAD(+) site is built by threonine 190 and asparagine 221. Residue serine 348 coordinates substrate.

This sequence belongs to the Glu/Leu/Phe/Val dehydrogenases family. In terms of assembly, homohexamer.

It catalyses the reaction L-glutamate + NAD(+) + H2O = 2-oxoglutarate + NH4(+) + NADH + H(+). The polypeptide is NAD-specific glutamate dehydrogenase (gluD) (Staphylococcus aureus (strain COL)).